Consider the following 623-residue polypeptide: Calnexin (623 aa).

Residues 1–21 (MLNRKWSFVFLTFLLVISVNA) form the signal peptide. Residue aspartate 108 participates in Ca(2+) binding. Residues cysteine 151 and cysteine 185 are joined by a disulfide bond. Positions 155, 157, 176, and 183 each coordinate an alpha-D-glucoside. N-linked (GlcNAc...) asparagine glycosylation is present at asparagine 202. The disordered stretch occupies residues 260–337 (SLTPPKEIFD…QKPQDWDEDM (78 aa)). Basic and acidic residues predominate over residues 266–276 (EIFDETDLKPE). Residues 267 to 400 (IFDETDLKPE…RLIDNPNYFE (134 aa)) form a p domain (Extended arm) region. Repeat copies occupy residues 269–281 (DETDLKPEDWDER), 286–298 (DETASKPDDWDEN), 305–317 (DESATKPYDWNEE), 324–336 (DPEAQKPQDWDED), and 339–349 (GSWEAPLIDNP). 2 4 X approximate repeats regions span residues 269–336 (DETD…WDED) and 339–396 (GSWE…IDNP). Acidic residues-rich tracts occupy residues 277 to 287 (DWDEREQIEDE) and 314 to 323 (WNEEENELIP). A disulfide bridge connects residues cysteine 351 and cysteine 357. A run of 3 repeats spans residues 358–368 (GTWKPPTIKNP), 372–382 (GKWVRPKIANP), and 386–396 (GKWSPRLIDNP). Glutamate 416 contributes to the an alpha-D-glucoside binding site. Residue aspartate 427 participates in Ca(2+) binding. Residues 480-500 (LWAVYILCILLPLIAIGVFCF) traverse the membrane as a helical segment. Positions 536 to 623 (IAEDEEDNQP…AKRRTARRGD (88 aa)) are disordered. Over residues 556 to 565 (IDEDEQDEVE) the composition is skewed to acidic residues. The span at 566–581 (QQPSSSKTASSESSSA) shows a compositional bias: low complexity. Positions 614-623 (AKRRTARRGD) are enriched in basic residues.

Belongs to the calreticulin family. Post-translationally, glycosylation is important for its biological activity.

The protein localises to the endoplasmic reticulum membrane. Its subcellular location is the cytoplasm. It localises to the perinuclear region. The protein resides in the cytoplasmic vesicle. In terms of biological role, calcium-binding protein that interacts with newly synthesized monoglucosylated glycoproteins in the endoplasmic reticulum. It may act in assisting protein assembly and/or in the retention within the ER of unassembled protein subunits. It seems to play a major role in the quality control apparatus of the ER by the retention of incorrectly folded proteins. Required for embryogenesis and larval development under heat and ER stress conditions. May be important for germ cell development. Involved in neuronal necrotic cell death. The chain is Calnexin from Caenorhabditis briggsae.